We begin with the raw amino-acid sequence, 1223 residues long: ATP-dependent DNA helicase P143 (1223 aa).

The Nuclear localization signal motif lies at 692-701 (RKCRCVQKIK). 919–926 (GVPLSGKS) serves as a coordination point for ATP. The segment at residues 967–981 (TINELKKCSESFFKK) is a DNA-binding region (H-T-H motif).

The protein localises to the host nucleus. It catalyses the reaction ATP + H2O = ADP + phosphate + H(+). In terms of biological role, essential for the initiation of viral DNA replication, it may contribute to other functions such as controlling the switch to the late phase and leading to the inhibition of host protein synthesis. Required for late and very late gene expression. This chain is ATP-dependent DNA helicase P143 (P143), found in Orgyia pseudotsugata multicapsid polyhedrosis virus (OpMNPV).